The chain runs to 461 residues: Bifunctional protein HldE (461 aa).

The segment at Met-1–Glu-312 is ribokinase. Position 191–194 (Asn-191–Glu-194) interacts with ATP. The active site involves Asp-259. The interval Phe-334–Lys-461 is cytidylyltransferase.

This sequence in the N-terminal section; belongs to the carbohydrate kinase PfkB family. The protein in the C-terminal section; belongs to the cytidylyltransferase family. As to quaternary structure, homodimer.

It carries out the reaction D-glycero-beta-D-manno-heptose 7-phosphate + ATP = D-glycero-beta-D-manno-heptose 1,7-bisphosphate + ADP + H(+). It catalyses the reaction D-glycero-beta-D-manno-heptose 1-phosphate + ATP + H(+) = ADP-D-glycero-beta-D-manno-heptose + diphosphate. The protein operates within nucleotide-sugar biosynthesis; ADP-L-glycero-beta-D-manno-heptose biosynthesis; ADP-L-glycero-beta-D-manno-heptose from D-glycero-beta-D-manno-heptose 7-phosphate: step 1/4. It functions in the pathway nucleotide-sugar biosynthesis; ADP-L-glycero-beta-D-manno-heptose biosynthesis; ADP-L-glycero-beta-D-manno-heptose from D-glycero-beta-D-manno-heptose 7-phosphate: step 3/4. Its function is as follows. Catalyzes the phosphorylation of D-glycero-D-manno-heptose 7-phosphate at the C-1 position to selectively form D-glycero-beta-D-manno-heptose-1,7-bisphosphate. Catalyzes the ADP transfer from ATP to D-glycero-beta-D-manno-heptose 1-phosphate, yielding ADP-D-glycero-beta-D-manno-heptose. The polypeptide is Bifunctional protein HldE (Campylobacter jejuni subsp. doylei (strain ATCC BAA-1458 / RM4099 / 269.97)).